The primary structure comprises 633 residues: DNA mismatch repair protein MutL (633 aa).

2 disordered regions span residues 337–364 (RPDDQLAPPGATSLTEPRPTGAAAGEFG) and 383–405 (VGWSGGSSASGGSSGYSAYTRPE). The segment covering 385–396 (WSGGSSASGGSS) has biased composition (gly residues).

The protein belongs to the DNA mismatch repair MutL/HexB family.

Its function is as follows. This protein is involved in the repair of mismatches in DNA. It is required for dam-dependent methyl-directed DNA mismatch repair. May act as a 'molecular matchmaker', a protein that promotes the formation of a stable complex between two or more DNA-binding proteins in an ATP-dependent manner without itself being part of a final effector complex. This is DNA mismatch repair protein MutL from Pseudomonas aeruginosa (strain LESB58).